The chain runs to 351 residues: Adenine deaminase (351 aa).

The Zn(2+) site is built by His-20, His-22, and His-200. Catalysis depends on Glu-203, which acts as the Proton donor. A Zn(2+)-binding site is contributed by Asp-281. Asp-282 serves as a coordination point for substrate.

It belongs to the metallo-dependent hydrolases superfamily. Adenosine and AMP deaminases family. Adenine deaminase type 2 subfamily. It depends on Zn(2+) as a cofactor.

It carries out the reaction adenine + H2O + H(+) = hypoxanthine + NH4(+). In terms of biological role, catalyzes the hydrolytic deamination of adenine to hypoxanthine. Plays an important role in the purine salvage pathway and in nitrogen catabolism. The polypeptide is Adenine deaminase (Cupriavidus pinatubonensis (strain JMP 134 / LMG 1197) (Cupriavidus necator (strain JMP 134))).